Reading from the N-terminus, the 686-residue chain is Phosphomethylpyrimidine synthase (686 aa).

Substrate is bound by residues Asn-235, Met-264, Tyr-293, His-329, 349 to 351, 390 to 393, and Glu-429; these read SRG and DGMR. Residue His-433 coordinates Zn(2+). Residue Tyr-456 coordinates substrate. His-497 lines the Zn(2+) pocket. [4Fe-4S] cluster contacts are provided by Cys-577, Cys-580, and Cys-585. The disordered stretch occupies residues 659–686; that stretch reads IDSSGINDNKNDQQDASVVRVPSLEIEG.

This sequence belongs to the ThiC family. Homodimer. The cofactor is [4Fe-4S] cluster.

The catalysed reaction is 5-amino-1-(5-phospho-beta-D-ribosyl)imidazole + S-adenosyl-L-methionine = 4-amino-2-methyl-5-(phosphooxymethyl)pyrimidine + CO + 5'-deoxyadenosine + formate + L-methionine + 3 H(+). It functions in the pathway cofactor biosynthesis; thiamine diphosphate biosynthesis. Functionally, catalyzes the synthesis of the hydroxymethylpyrimidine phosphate (HMP-P) moiety of thiamine from aminoimidazole ribotide (AIR) in a radical S-adenosyl-L-methionine (SAM)-dependent reaction. This is Phosphomethylpyrimidine synthase from Shewanella denitrificans (strain OS217 / ATCC BAA-1090 / DSM 15013).